The chain runs to 86 residues: V-type proton ATPase subunit e (86 aa).

The chain crosses the membrane as a helical span at residues 1-21 (MGILIPLVSVSAFWAIIGFGG). The Cytoplasmic segment spans residues 22-32 (PWIVPKGPNRG). The chain crosses the membrane as a helical span at residues 33–53 (IIQLMIIMTAVCCWMFWIMVF). At 54-86 (LHQLNPLIGPQINVKTIRWISEKWGDAPNVINN) the chain is on the lumenal side.

This sequence belongs to the V-ATPase e1/e2 subunit family. V-ATPase is a heteromultimeric enzyme made up of two complexes: the ATP-hydrolytic V1 complex and the proton translocation V0 complex. The V1 complex consists of three catalytic AB heterodimers that form a heterohexamer, three peripheral stalks each consisting of EG heterodimers, one central rotor including subunits D and F, and the regulatory subunits C and H. The proton translocation complex V0 consists of the proton transport subunit a, a ring of proteolipid subunits c9c'', rotary subunit d, subunits e and f, and the accessory subunits vah-19/Ac45 and vah-20/PRR.

Its subcellular location is the apical cell membrane. In terms of biological role, subunit of the V0 complex of vacuolar(H+)-ATPase (V-ATPase), a multisubunit enzyme composed of a peripheral complex (V1) that hydrolyzes ATP and a membrane integral complex (V0) that translocates protons. V-ATPase is responsible for acidifying and maintaining the pH of intracellular compartments and in some cell types, is targeted to the plasma membrane, where it is responsible for acidifying the extracellular environment. During embryonic development, the V-ATPase is required to repress fusion of epidermal cells probably by negatively regulating eff-1-mediated cell fusion. This chain is V-type proton ATPase subunit e, found in Caenorhabditis elegans.